The following is a 1040-amino-acid chain: Multidrug resistance protein MdtB (1040 aa).

11 consecutive transmembrane segments (helical) span residues 15-37 (LFILRPVATTLLMAAILLAGIIG), 345-362 (FELMLAIALVVMIIYLFL), 367-389 (ATIIPGVAVPLSLIGTFAVMVFL), 396-418 (LTLMALTIATGFVVDDAIVVIEN), 438-460 (GEIGFTIISLTFSLIAVLIPLLF), 472-494 (FAVTLAVAILISAVVSLTLTPMM), 535-557 (HPWLTLSVAFATLLLSVMLWITI), 867-889 (VWLIVAAVVAMYIVLGVLYESFI), 909-931 (LIIAGSELDIIAIIGIILLIGIV), 968-990 (ILMTTLAALLGALPLMLSTGVGA), and 1000-1022 (MVGGLLVSQVLTLFTTPVIYLLF).

Belongs to the resistance-nodulation-cell division (RND) (TC 2.A.6) family. MdtB subfamily. As to quaternary structure, part of a tripartite efflux system composed of MdtA, MdtB and MdtC. MdtB forms a heteromultimer with MdtC.

The protein localises to the cell inner membrane. The sequence is that of Multidrug resistance protein MdtB from Salmonella typhi.